Reading from the N-terminus, the 137-residue chain is MLSPKRTRFRKQHRGKLKGISYRGNHICFGRYALQALEPAWLTSRQIEAGRRAMTRNARRGGKIWVRIFPDKPVTVRPAETRMGSGKGCPEYWVAVVKPGRILYEMGGVTKKIARRAFSIAASKMPIRTQFIISEIE.

It belongs to the universal ribosomal protein uL16 family. In terms of assembly, part of the 50S ribosomal subunit.

The protein resides in the plastid. The chain is Large ribosomal subunit protein uL16c from Cuscuta exaltata (Tall dodder).